An 83-amino-acid polypeptide reads, in one-letter code: Exodeoxyribonuclease 7 small subunit (83 aa).

Belongs to the XseB family. Heterooligomer composed of large and small subunits.

It is found in the cytoplasm. The catalysed reaction is Exonucleolytic cleavage in either 5'- to 3'- or 3'- to 5'-direction to yield nucleoside 5'-phosphates.. In terms of biological role, bidirectionally degrades single-stranded DNA into large acid-insoluble oligonucleotides, which are then degraded further into small acid-soluble oligonucleotides. This Novosphingobium aromaticivorans (strain ATCC 700278 / DSM 12444 / CCUG 56034 / CIP 105152 / NBRC 16084 / F199) protein is Exodeoxyribonuclease 7 small subunit.